The following is a 1529-amino-acid chain: DNA-directed RNA polymerase subunit beta' (1529 aa).

Positions 156, 158, 183, and 186 each coordinate Zn(2+). Aspartate 1328, aspartate 1330, and aspartate 1332 together coordinate Mg(2+).

This sequence belongs to the RNA polymerase beta' chain family. RpoC1 subfamily. As to quaternary structure, in plastids the minimal PEP RNA polymerase catalytic core is composed of four subunits: alpha, beta, beta', and beta''. When a (nuclear-encoded) sigma factor is associated with the core the holoenzyme is formed, which can initiate transcription. Mg(2+) serves as cofactor. It depends on Zn(2+) as a cofactor.

The protein resides in the plastid. Its subcellular location is the chloroplast. It carries out the reaction RNA(n) + a ribonucleoside 5'-triphosphate = RNA(n+1) + diphosphate. In terms of biological role, DNA-dependent RNA polymerase catalyzes the transcription of DNA into RNA using the four ribonucleoside triphosphates as substrates. In Tetradesmus obliquus (Green alga), this protein is DNA-directed RNA polymerase subunit beta'.